Consider the following 312-residue polypeptide: Gamma-soluble NSF attachment protein (312 aa).

The segment at 281-312 (KKKSPATPQAKPDGAAGMAAEEEEDEYSGGLC) is disordered. Position 284 is a phosphoserine (Ser284). The residue at position 287 (Thr287) is a Phosphothreonine. Residues 300 to 312 (AEEEEDEYSGGLC) show a composition bias toward acidic residues. Ser308 carries the post-translational modification Phosphoserine.

It belongs to the SNAP family. Interacts with RAB11FIP5. Interacts with VTI1A. As to expression, abundantly expressed in the heart, liver and kidneys with lower expression in the brain, spleen, lung, muscle and testes.

It is found in the membrane. It localises to the golgi apparatus. Required for vesicular transport between the endoplasmic reticulum and the Golgi apparatus. The polypeptide is Gamma-soluble NSF attachment protein (Mus musculus (Mouse)).